Consider the following 1691-residue polypeptide: Protein TIC 214 (1691 aa).

A run of 6 helical transmembrane segments spans residues 19–39 (MLLG…SQIL), 60–80 (VLAQ…LLLL), 84–104 (LLTI…KDFP), 123–143 (LFLI…NSVL), 158–178 (TVFM…FNFF), and 200–220 (FIYA…LGRA). Residues 819 to 839 (EKQHTLQRKHKEIGSKSRELK) are disordered.

It belongs to the TIC214 family. As to quaternary structure, part of the Tic complex.

It localises to the plastid. It is found in the chloroplast inner membrane. Involved in protein precursor import into chloroplasts. May be part of an intermediate translocation complex acting as a protein-conducting channel at the inner envelope. This chain is Protein TIC 214, found in Adiantum capillus-veneris (Maidenhair fern).